Reading from the N-terminus, the 485-residue chain is Maturase K (485 aa).

The protein belongs to the intron maturase 2 family. MatK subfamily.

The protein resides in the plastid. It is found in the chloroplast. Its function is as follows. Usually encoded in the trnK tRNA gene intron. Probably assists in splicing its own and other chloroplast group II introns. The sequence is that of Maturase K from Malus domestica (Apple).